The following is a 91-amino-acid chain: C-C motif chemokine 5 (91 aa).

The N-terminal stretch at 1–23 (MKVSAATFAILLATATFRAPASA) is a signal peptide. Cystine bridges form between Cys-33-Cys-57 and Cys-34-Cys-73.

This sequence belongs to the intercrine beta (chemokine CC) family.

It is found in the secreted. Its function is as follows. Chemoattractant for blood monocytes, memory T-helper cells and eosinophils. Causes the release of histamine from basophils and activates eosinophils. May activate several chemokine receptors including CCR1, CCR3, CCR4 and CCR5. May also be an agonist of the G protein-coupled receptor GPR75. Together with GPR75, may play a role in neuron survival through activation of a downstream signaling pathway involving the PI3, Akt and MAP kinases. By activating GPR75 may also play a role in insulin secretion by islet cells. This is C-C motif chemokine 5 (CCL5) from Canis lupus familiaris (Dog).